The primary structure comprises 84 residues: Kappa-conotoxin-like Im11.3 (84 aa).

The signal sequence occupies residues 1-26 (MMFRLTSVSCFLLVIACLNLFQVVLT). 4 cysteine pairs are disulfide-bonded: Cys29-Cys43, Cys36-Cys48, Cys42-Cys51, and Cys47-Cys64. Positions 71–84 (LRPSHPLFLLLPAR) are excised as a propeptide.

This sequence belongs to the conotoxin I2 superfamily. Expressed by the venom duct.

Its subcellular location is the secreted. Inhibits the vertebrate voltage-gated potassium channels Kv1.1/KCNA1 and Kv1.3/KCNA3. This Conus imperialis (Imperial cone) protein is Kappa-conotoxin-like Im11.3.